Consider the following 217-residue polypeptide: Probable transaldolase (217 aa).

Lys83 acts as the Schiff-base intermediate with substrate in catalysis.

Belongs to the transaldolase family. Type 3B subfamily.

It is found in the cytoplasm. The enzyme catalyses D-sedoheptulose 7-phosphate + D-glyceraldehyde 3-phosphate = D-erythrose 4-phosphate + beta-D-fructose 6-phosphate. It functions in the pathway carbohydrate degradation; pentose phosphate pathway; D-glyceraldehyde 3-phosphate and beta-D-fructose 6-phosphate from D-ribose 5-phosphate and D-xylulose 5-phosphate (non-oxidative stage): step 2/3. Functionally, transaldolase is important for the balance of metabolites in the pentose-phosphate pathway. The sequence is that of Probable transaldolase from Rhizorhabdus wittichii (strain DSM 6014 / CCUG 31198 / JCM 15750 / NBRC 105917 / EY 4224 / RW1) (Sphingomonas wittichii).